The sequence spans 260 residues: Acetylglutamate kinase (260 aa).

Substrate-binding positions include 41-42 (GG), Arg-63, and Asn-157.

It belongs to the acetylglutamate kinase family. ArgB subfamily.

Its subcellular location is the cytoplasm. It catalyses the reaction N-acetyl-L-glutamate + ATP = N-acetyl-L-glutamyl 5-phosphate + ADP. It participates in amino-acid biosynthesis; L-arginine biosynthesis; N(2)-acetyl-L-ornithine from L-glutamate: step 2/4. Its function is as follows. Catalyzes the ATP-dependent phosphorylation of N-acetyl-L-glutamate. The protein is Acetylglutamate kinase of Acidobacterium capsulatum (strain ATCC 51196 / DSM 11244 / BCRC 80197 / JCM 7670 / NBRC 15755 / NCIMB 13165 / 161).